Here is a 242-residue protein sequence, read N- to C-terminus: Large ribosomal subunit protein uL1 (242 aa).

Belongs to the universal ribosomal protein uL1 family. Part of the 50S ribosomal subunit.

Binds directly to 23S rRNA. The L1 stalk is quite mobile in the ribosome, and is involved in E site tRNA release. Functionally, protein L1 is also a translational repressor protein, it controls the translation of the L11 operon by binding to its mRNA. The protein is Large ribosomal subunit protein uL1 of Persephonella marina (strain DSM 14350 / EX-H1).